Reading from the N-terminus, the 120-residue chain is Aspartate 1-decarboxylase (120 aa).

The Schiff-base intermediate with substrate; via pyruvic acid role is filled by Ser-25. A Pyruvic acid (Ser) modification is found at Ser-25. Thr-57 provides a ligand contact to substrate. The Proton donor role is filled by Tyr-58. 73-75 contributes to the substrate binding site; the sequence is GAA.

Belongs to the PanD family. Heterooctamer of four alpha and four beta subunits. It depends on pyruvate as a cofactor. Is synthesized initially as an inactive proenzyme, which is activated by self-cleavage at a specific serine bond to produce a beta-subunit with a hydroxyl group at its C-terminus and an alpha-subunit with a pyruvoyl group at its N-terminus.

The protein localises to the cytoplasm. It carries out the reaction L-aspartate + H(+) = beta-alanine + CO2. It functions in the pathway cofactor biosynthesis; (R)-pantothenate biosynthesis; beta-alanine from L-aspartate: step 1/1. Functionally, catalyzes the pyruvoyl-dependent decarboxylation of aspartate to produce beta-alanine. This is Aspartate 1-decarboxylase from Deinococcus deserti (strain DSM 17065 / CIP 109153 / LMG 22923 / VCD115).